Reading from the N-terminus, the 242-residue chain is Large ribosomal subunit protein uL2 (242 aa).

The disordered stretch occupies residues 201–242 (VDHPFGGGRHQHTGKPTTVSRKKVPPGRKVGHISARRTGVRK). Positions 220 to 242 (SRKKVPPGRKVGHISARRTGVRK) are enriched in basic residues.

This sequence belongs to the universal ribosomal protein uL2 family. Part of the 50S ribosomal subunit. Forms a bridge to the 30S subunit in the 70S ribosome.

Its function is as follows. One of the primary rRNA binding proteins. Required for association of the 30S and 50S subunits to form the 70S ribosome, for tRNA binding and peptide bond formation. It has been suggested to have peptidyltransferase activity; this is somewhat controversial. Makes several contacts with the 16S rRNA in the 70S ribosome. The chain is Large ribosomal subunit protein uL2 from Methanocaldococcus jannaschii (strain ATCC 43067 / DSM 2661 / JAL-1 / JCM 10045 / NBRC 100440) (Methanococcus jannaschii).